We begin with the raw amino-acid sequence, 90 residues long: uncharacterized protein (90 aa).

This is an uncharacterized protein from Aedes vexans (Inland floodwater mosquito).